The sequence spans 130 residues: Small ribosomal subunit protein uS9 (130 aa).

The protein belongs to the universal ribosomal protein uS9 family.

In Pseudomonas paraeruginosa (strain DSM 24068 / PA7) (Pseudomonas aeruginosa (strain PA7)), this protein is Small ribosomal subunit protein uS9.